We begin with the raw amino-acid sequence, 83 residues long: Large ribosomal subunit protein eL37 (83 aa).

The Zn(2+) site is built by cysteine 19, cysteine 22, cysteine 34, and cysteine 37. A C4-type zinc finger spans residues 19–37 (CRRCGRNSYHVQWERCAAC).

This sequence belongs to the eukaryotic ribosomal protein eL37 family. Requires Zn(2+) as cofactor.

Binds to the 23S rRNA. This Leishmania donovani protein is Large ribosomal subunit protein eL37 (RPL37).